The sequence spans 80 residues: Dermaseptin-A5 (80 aa).

The signal sequence occupies residues Met1–Cys22. A propeptide spanning residues Glu23 to Met43 is cleaved from the precursor. The disordered stretch occupies residues Glu24–Arg45. Acidic residues predominate over residues Glu30–Gln40. Val77 bears the Valine amide mark. Positions Glu79 to Gln80 are excised as a propeptide.

This sequence belongs to the frog skin active peptide (FSAP) family. Dermaseptin subfamily. As to expression, expressed by the skin glands.

The protein resides in the secreted. Possesses a potent antimicrobial activity against Gram-positive and Gram-negative bacteria. Probably acts by disturbing membrane functions with its amphipathic structure. The polypeptide is Dermaseptin-A5 (Agalychnis annae (Blue-sided leaf frog)).